Here is a 210-residue protein sequence, read N- to C-terminus: MARYIGPVCRQCRREGMKLYLKGERCHSEKCAIEKRNFIPGQHGKDRAKKIVGYGLQLREKQKVRRVYGVLERQFRNAFEKAALQKGITGENLMQNLERRLDSVIYRMGFGTSRAQARQVVRHGHINVNGRKCNIPSALINVGDEITVRETSKNNATILSARDATAHAPAPNWIEVDREGLKGRVQSLPKREDLVQIQLNEQLIVELYSK.

The S4 RNA-binding domain occupies 99 to 161 (RRLDSVIYRM…SKNNATILSA (63 aa)).

The protein belongs to the universal ribosomal protein uS4 family. Part of the 30S ribosomal subunit. Contacts protein S5. The interaction surface between S4 and S5 is involved in control of translational fidelity.

Its function is as follows. One of the primary rRNA binding proteins, it binds directly to 16S rRNA where it nucleates assembly of the body of the 30S subunit. Functionally, with S5 and S12 plays an important role in translational accuracy. In Solibacter usitatus (strain Ellin6076), this protein is Small ribosomal subunit protein uS4.